A 119-amino-acid polypeptide reads, in one-letter code: Small ribosomal subunit protein bS16 (119 aa).

The protein belongs to the bacterial ribosomal protein bS16 family.

In Chlamydia felis (strain Fe/C-56) (Chlamydophila felis), this protein is Small ribosomal subunit protein bS16.